We begin with the raw amino-acid sequence, 416 residues long: Proline-serine-threonine phosphatase-interacting protein 1 (416 aa).

In terms of domain architecture, F-BAR spans 5–264 (LQFKDAFWCR…TLEGCSIDAD (260 aa)). Residues 166–212 (HQKQVEKSQNKARQCKDSATEAERVYRQSIAQLEKVRAEWEQEHRTT) are a coiled coil. Position 318 is a phosphoserine (serine 318). Tyrosine 345 carries the phosphotyrosine modification. An SH3 domain is found at 359 to 416 (SPAQEYRALYDYTAQNPDELDLSAGDILEVILEGEDGWWTVERNGQRGFVPGSYLEKL).

As to quaternary structure, homodimer. Homotrimer. Interacts (via coiled-coil domain) with CD2AP, PTPN12 and PTPN18. Interacts (via SH3 domain) with ABL1 and WAS. Interacts (via SH3 and coiled-coil domains) with MEFV (via B-box zinc finger); the interaction allows binding of MEFV to PYCARD and facilitates formation of PYCARD pyroptosomes. Interacts with CD2, DNM2 and FASLG. In terms of processing, dephosphorylated on Tyr-345 by PTPN18, this event negatively regulates the association of PSTPIP1 with SH2 domain-containing proteins as tyrosine kinase. Phosphorylation of Tyr-345 is probably required for subsequent phosphorylation at other tyrosine residues. Phosphorylation is induced by activation of the EGFR and PDGFR in a ABL1 dependent manner. The phosphorylation regulates the interaction with WAS and with MEFV. Highly expressed in the peripheral blood leukocytes, granulocytes and monocytes, namely in T-cells and natural killer cells, and in spleen. Weakly expressed in the thymus, small intestine, lung and placenta.

It localises to the cytoplasm. The protein resides in the cell membrane. It is found in the cell projection. Its subcellular location is the uropodium. The protein localises to the cytoskeleton. It localises to the perinuclear region. The protein resides in the lamellipodium. It is found in the cleavage furrow. Involved in regulation of the actin cytoskeleton. May regulate WAS actin-bundling activity. Bridges the interaction between ABL1 and PTPN18 leading to ABL1 dephosphorylation. May play a role as a scaffold protein between PTPN12 and WAS and allow PTPN12 to dephosphorylate WAS. Has the potential to physically couple CD2 and CD2AP to WAS. Acts downstream of CD2 and CD2AP to recruit WAS to the T-cell:APC contact site so as to promote the actin polymerization required for synapse induction during T-cell activation. Down-regulates CD2-stimulated adhesion through the coupling of PTPN12 to CD2. Also has a role in innate immunity and the inflammatory response. Recruited to inflammasomes by MEFV. Induces formation of pyroptosomes, large supramolecular structures composed of oligomerized PYCARD dimers which form prior to inflammatory apoptosis. Binding to MEFV allows MEFV to bind to PYCARD and facilitates pyroptosome formation. Regulates endocytosis and cell migration in neutrophils. This Homo sapiens (Human) protein is Proline-serine-threonine phosphatase-interacting protein 1 (PSTPIP1).